We begin with the raw amino-acid sequence, 140 residues long: Large-conductance mechanosensitive channel (140 aa).

2 helical membrane-spanning segments follow: residues 16 to 36 (VIDLAVGVVIGAAFGKIVTAL) and 84 to 104 (INTVVQFVIIAFAIFLLVKLI).

This sequence belongs to the MscL family. Homopentamer.

Its subcellular location is the cell inner membrane. Functionally, channel that opens in response to stretch forces in the membrane lipid bilayer. May participate in the regulation of osmotic pressure changes within the cell. The polypeptide is Large-conductance mechanosensitive channel (Xanthomonas oryzae pv. oryzae (strain PXO99A)).